The sequence spans 134 residues: Prefoldin subunit 4 (134 aa).

The residue at position 2 (Ala2) is an N-acetylalanine. Ser125 carries the phosphoserine modification.

This sequence belongs to the prefoldin subunit beta family. In terms of assembly, heterohexamer of two PFD-alpha type and four PFD-beta type subunits. Interacts with URI1; the interaction is phosphorylation-dependent and occurs in a growth-dependent manner.

The protein localises to the nucleus. It localises to the cytoplasm. Its subcellular location is the mitochondrion. Functionally, binds specifically to cytosolic chaperonin (c-CPN) and transfers target proteins to it. Binds to nascent polypeptide chain and promotes folding in an environment in which there are many competing pathways for nonnative proteins. The protein is Prefoldin subunit 4 (PFDN4) of Bos taurus (Bovine).